A 521-amino-acid chain; its full sequence is FAD-dependent monooxygenase DEP2 (521 aa).

The signal sequence occupies residues 1 to 22 (MHDSPPFKVIIVGAGVTGLTLA). FAD-binding residues include aspartate 36 and arginine 109. 2 N-linked (GlcNAc...) asparagine glycosylation sites follow: asparagine 139 and asparagine 220. Residues aspartate 310 and glycine 323 each coordinate FAD. Residues 477 to 497 (ILVLWAGLWLAICFFHLVFSG) form a helical membrane-spanning segment. Residue asparagine 515 is glycosylated (N-linked (GlcNAc...) asparagine).

The protein belongs to the paxM FAD-dependent monooxygenase family. The cofactor is FAD.

Its subcellular location is the membrane. It participates in polyketide biosynthesis. Its function is as follows. Part of the gene cluster that mediates the biosynthesis of depudecin, a highly oxidized eleven-carbon linear polyketide that acts as a histone deacetylase (HDAC) inhibitor and makes a small contribution to pathogenesis. The reducing polyketide synthase DEP5 is the central enzyme in depudecin biosynthesis by yielding the backbone polyketide chain. The monooxygenases DEP2 and DEP4, as well as the uncharacterized protein DEP1, then act as tailoring enzymes to modify the intermediate polyketide chain into depudecin. This is FAD-dependent monooxygenase DEP2 from Fusarium langsethiae.